The following is a 390-amino-acid chain: Ureide permease 1 (390 aa).

The Extracellular segment spans residues 1–9; sequence MYMIESKGG. The helical transmembrane segment at 10-30 threads the bilayer; sequence AIACMLLALLFLGTWPAIMTL. At 31-44 the chain is on the cytoplasmic side; the sequence is TERRGRLPQHTYLD. Residues 45–65 form a helical membrane-spanning segment; the sequence is YTLTNLLAAVIIALTLGEIGP. Residues 66–78 lie on the Extracellular side of the membrane; sequence SRPNFFTQLSQDN. Residues 79-99 traverse the membrane as a helical segment; it reads WQSVMFAMAGGIVLSLGNLAT. Topologically, residues 100 to 101 are cytoplasmic; the sequence is QY. A helical membrane pass occupies residues 102 to 122; sequence AWAYVGLSVTEVITASITVVI. Residues 123–136 lie on the Extracellular side of the membrane; it reads GTTLNYFLDDRINR. Residues 137–157 form a helical membrane-spanning segment; it reads AEVLFPGVACFLIAVCFGSAV. The Cytoplasmic segment spans residues 158–221; it reads HKSNAADNKT…RAIKVFGKST (64 aa). 213 to 220 is a binding site for ATP; sequence AIKVFGKS. Residues 222–242 form a helical membrane-spanning segment; sequence IIGLVITFFAGICFSLFSPAF. The Extracellular portion of the chain corresponds to 243–261; it reads NLATNDQWHTLKHGVPKLN. Residues 262–282 form a helical membrane-spanning segment; sequence VYTAFFYFSISAFVVALILNI. The Cytoplasmic segment spans residues 283–307; that stretch reads RFLYWPILGLPRSSFKAYLNDWNGR. A helical membrane pass occupies residues 308–328; sequence GWSFLAGFLCGFGNGLQFMGG. Residues 329–333 are Extracellular-facing; it reads QAAGY. The chain crosses the membrane as a helical span at residues 334 to 354; the sequence is AAADAVQALPLVSTFWGILLF. The Cytoplasmic segment spans residues 355–363; the sequence is GEYRRSSRK. The helical transmembrane segment at 364-384 threads the bilayer; sequence TYTLLISMLLMFIVAVAVLMA. At 385–390 the chain is on the extracellular side; that stretch reads SSGHRK.

It belongs to the plant ureide permease (TC 2.A.7.19) family. As to expression, expressed in leaves, flowers, roots and stems.

Its subcellular location is the membrane. Proton-coupled transporter that transports a wide spectrum of oxo derivatives of heterocyclic nitrogen compounds, including allantoin, uric acid and xanthine, but not adenine. Mediates high affinity transport of uracil and 5-fluorouracil (a toxic uracil analog). Mediates transport of free pyrimidines and may function during early seedling development in salvage pathways, by the utilization of pyrimidines from seed storage tissue. The protein is Ureide permease 1 of Arabidopsis thaliana (Mouse-ear cress).